The chain runs to 364 residues: MVQEIDLGLTCDMHVHVREGAMCELVTPKIRDGGVSIAYIMPNLQPPITTLDRVIEYKKTLQKLAPKTTFLMSFYLSKDLTPDLIHEAAQQHAIRGVKCYPAGVTTNSAAGVDPNDFSAFYPIFKAMQEENLVLNLHGEKPSVHDGDKEPIHVLNAEEAFLPALKKLHNDFPNLKIILEHCTSESAIKTIEDINKNVKKATDVKVAATLTAHHLFLTIDDWAGNPVNFCKPVAKLPNDKKALVKAAVSGKPYFFFGSDSAPHPVQNKANYEGVCAGVYSQSFAIPYIAQVFEEQNALENLKGFVSDFGISFYEVKDSEVASSDKAILFKKEQVIPQVISDGKDISIIPFKAGDKLSWSVRWEPR.

Zn(2+) is bound by residues His-14, His-16, Lys-98, His-137, His-180, and Asp-258. Lys-98 carries the post-translational modification N6-carboxylysine.

Belongs to the metallo-dependent hydrolases superfamily. DHOase family. Class II DHOase subfamily. It depends on Zn(2+) as a cofactor.

It catalyses the reaction (S)-dihydroorotate + H2O = N-carbamoyl-L-aspartate + H(+). The protein operates within pyrimidine metabolism; UMP biosynthesis via de novo pathway; (S)-dihydroorotate from bicarbonate: step 3/3. Catalyzes the conversion of ureidosuccinic acid (USA) to dihydroorotate, the third step of the de novo pyrimidine biosynthetic pathway. The sequence is that of Dihydroorotase (URA4) from Saccharomyces cerevisiae (strain ATCC 204508 / S288c) (Baker's yeast).